A 354-amino-acid chain; its full sequence is Fusarinine C esterase sidJ (354 aa).

The protein belongs to the sidJ hydrolase family. Homodimer.

The enzyme catalyses fusarinine C + 3 H2O = 3 fusarinine + Fe(3+). Functionally, displays specific fusarinine C (FsC) esterase activity but does not hydrolyze triacetylfusarinine C (TAFC), which has the same core structure as fusarinine C. Both extra- and intracellular siderophores have been shown to be crucial for the virulence. Subsequent to chelation of iron and uptake, FsC and TAFC are hydrolyzed and the iron is transferred to the metabolism or to the intracellular siderophore ferricrocin (FC) for transport and storage of iron. This is Fusarinine C esterase sidJ from Aspergillus fumigatus (strain ATCC MYA-4609 / CBS 101355 / FGSC A1100 / Af293) (Neosartorya fumigata).